Here is a 1285-residue protein sequence, read N- to C-terminus: Tat-binding homolog 7 (1285 aa).

4 disordered regions span residues 1 to 95 (MARS…LTYR), 121 to 173 (MSDD…RTRR), 224 to 243 (GREEEEEGDEEEAESGEKEQ), and 258 to 359 (QEDE…ERGR). Acidic residues-rich tracts occupy residues 226-237 (EEEEEGDEEEAE) and 258-270 (QEDEESSNAESSE). A compositionally biased stretch (basic residues) spans 311 to 325 (NRHHRNRNTSNRRRR). 446 to 453 (GPPGTGKT) is an ATP binding site. A Bromo domain is found at 928 to 1032 (ALQRQMRMFF…NTFRDAIDDM (105 aa)). Residues 1100–1196 (EKLKEKLGIS…PTIQSSSSQE (97 aa)) are disordered. Positions 1136–1149 (KLNKKKKDQKRNKK) are enriched in basic residues. Residues 1155-1175 (PDGDDTEETEEAVAENNVDAD) show a composition bias toward acidic residues.

Belongs to the AAA ATPase family.

In terms of biological role, thought to form a complex that enhances transcription from repetitive DNA sequences by modulating chromatin structure. In Caenorhabditis briggsae, this protein is Tat-binding homolog 7.